A 212-amino-acid polypeptide reads, in one-letter code: Peptide methionine sulfoxide reductase MsrA (212 aa).

Cys51 is a catalytic residue.

This sequence belongs to the MsrA Met sulfoxide reductase family.

The catalysed reaction is L-methionyl-[protein] + [thioredoxin]-disulfide + H2O = L-methionyl-(S)-S-oxide-[protein] + [thioredoxin]-dithiol. It carries out the reaction [thioredoxin]-disulfide + L-methionine + H2O = L-methionine (S)-S-oxide + [thioredoxin]-dithiol. Functionally, has an important function as a repair enzyme for proteins that have been inactivated by oxidation. Catalyzes the reversible oxidation-reduction of methionine sulfoxide in proteins to methionine. This is Peptide methionine sulfoxide reductase MsrA from Vibrio cholerae serotype O1 (strain ATCC 39541 / Classical Ogawa 395 / O395).